The sequence spans 1342 residues: DNA-directed RNA polymerase subunit beta (1342 aa).

This sequence belongs to the RNA polymerase beta chain family. In terms of assembly, the RNAP catalytic core consists of 2 alpha, 1 beta, 1 beta' and 1 omega subunit. When a sigma factor is associated with the core the holoenzyme is formed, which can initiate transcription.

The enzyme catalyses RNA(n) + a ribonucleoside 5'-triphosphate = RNA(n+1) + diphosphate. DNA-dependent RNA polymerase catalyzes the transcription of DNA into RNA using the four ribonucleoside triphosphates as substrates. The protein is DNA-directed RNA polymerase subunit beta of Pectobacterium carotovorum subsp. carotovorum (strain PC1).